Reading from the N-terminus, the 465-residue chain is Chromosomal replication initiator protein DnaA (465 aa).

The tract at residues 1-85 is domain I, interacts with DnaA modulators; sequence MSGFWESCLQ…IALVIGSGKA (85 aa). Residues 85-129 form a domain II region; sequence ATAARIQATTTDSGQNAPANPATTSEKRTAASEKARGKGSNYEKS. A compositionally biased stretch (polar residues) spans 93-108; sequence TTTDSGQNAPANPATT. The disordered stretch occupies residues 93–125; sequence TTTDSGQNAPANPATTSEKRTAASEKARGKGSN. A compositionally biased stretch (basic and acidic residues) spans 109 to 125; the sequence is SEKRTAASEKARGKGSN. The tract at residues 130–346 is domain III, AAA+ region; sequence RLFPSFTFDN…GALKKVLAYS (217 aa). ATP contacts are provided by Gly-174, Gly-176, Lys-177, and Thr-178. Positions 347–465 are domain IV, binds dsDNA; it reads SFHGRVIALD…LHVLLQVLKG (119 aa).

Belongs to the DnaA family. As to quaternary structure, oligomerizes as a right-handed, spiral filament on DNA at oriC.

It is found in the cytoplasm. Plays an essential role in the initiation and regulation of chromosomal replication. ATP-DnaA binds to the origin of replication (oriC) to initiate formation of the DNA replication initiation complex once per cell cycle. Binds the DnaA box (a 9 base pair repeat at the origin) and separates the double-stranded (ds)DNA. Forms a right-handed helical filament on oriC DNA; dsDNA binds to the exterior of the filament while single-stranded (ss)DNA is stabiized in the filament's interior. The ATP-DnaA-oriC complex binds and stabilizes one strand of the AT-rich DNA unwinding element (DUE), permitting loading of DNA polymerase. After initiation quickly degrades to an ADP-DnaA complex that is not apt for DNA replication. Binds acidic phospholipids. This Dechloromonas aromatica (strain RCB) protein is Chromosomal replication initiator protein DnaA.